The primary structure comprises 219 residues: MTDSDESSWIHWFCKQRGNEFFCEVDEEYIQDKFNLNFLDSNVKNYKCALEVILDLNPGSASEDPAEPELEASAEKLYGLIHARFILTNRGIELMLDKYNKGEFGTCPRAFCHSQPVLPIGLSDNPGEDMVRIYCPKCNDVYIPKASRHSNLDGAFFGTGFPHMFFMEKPDARPKRAKQKFVPRLYGFKIHPTAYRTAAEIQKDVTMTPVGEIDSPSHI.

The residue at position 2 (Thr2) is a Phosphothreonine; by autocatalysis.

Belongs to the casein kinase 2 subunit beta family. In terms of assembly, tetramer of two alpha and two beta' subunits. In terms of processing, phosphorylated by alpha subunit.

Functionally, participates in Wnt signaling. Plays a complex role in regulating the basal catalytic activity of the alpha subunit. The sequence is that of Casein kinase II subunit beta' (CkIIbeta2) from Drosophila melanogaster (Fruit fly).